Here is a 364-residue protein sequence, read N- to C-terminus: tRNA 2-selenouridine synthase (364 aa).

The Rhodanese domain occupies 14–137 (LLADTPLIDV…LRQTAIQATW (124 aa)). C97 acts as the S-selanylcysteine intermediate in catalysis.

It belongs to the SelU family. Monomer.

The enzyme catalyses 5-methylaminomethyl-2-thiouridine(34) in tRNA + selenophosphate + (2E)-geranyl diphosphate + H2O + H(+) = 5-methylaminomethyl-2-selenouridine(34) in tRNA + (2E)-thiogeraniol + phosphate + diphosphate. The catalysed reaction is 5-methylaminomethyl-2-thiouridine(34) in tRNA + (2E)-geranyl diphosphate = 5-methylaminomethyl-S-(2E)-geranyl-thiouridine(34) in tRNA + diphosphate. It catalyses the reaction 5-methylaminomethyl-S-(2E)-geranyl-thiouridine(34) in tRNA + selenophosphate + H(+) = 5-methylaminomethyl-2-(Se-phospho)selenouridine(34) in tRNA + (2E)-thiogeraniol. It carries out the reaction 5-methylaminomethyl-2-(Se-phospho)selenouridine(34) in tRNA + H2O = 5-methylaminomethyl-2-selenouridine(34) in tRNA + phosphate. Involved in the post-transcriptional modification of the uridine at the wobble position (U34) of tRNA(Lys), tRNA(Glu) and tRNA(Gln). Catalyzes the conversion of 2-thiouridine (S2U-RNA) to 2-selenouridine (Se2U-RNA). Acts in a two-step process involving geranylation of 2-thiouridine (S2U) to S-geranyl-2-thiouridine (geS2U) and subsequent selenation of the latter derivative to 2-selenouridine (Se2U) in the tRNA chain. This Salmonella enteritidis protein is tRNA 2-selenouridine synthase.